Reading from the N-terminus, the 474-residue chain is UDP-N-acetylmuramoyl-L-alanyl-D-glutamate--2,6-diaminopimelate ligase (474 aa).

S21 lines the UDP-N-acetyl-alpha-D-muramoyl-L-alanyl-D-glutamate pocket. 93–99 (GTNGKSS) is a binding site for ATP. UDP-N-acetyl-alpha-D-muramoyl-L-alanyl-D-glutamate is bound by residues 139-140 (TT), S166, Q172, and R174. Residue K206 is modified to N6-carboxylysine. Residues R367, 391-394 (DNPR), G441, and E445 contribute to the meso-2,6-diaminopimelate site. The Meso-diaminopimelate recognition motif motif lies at 391-394 (DNPR).

Belongs to the MurCDEF family. MurE subfamily. Requires Mg(2+) as cofactor. Carboxylation is probably crucial for Mg(2+) binding and, consequently, for the gamma-phosphate positioning of ATP.

Its subcellular location is the cytoplasm. The catalysed reaction is UDP-N-acetyl-alpha-D-muramoyl-L-alanyl-D-glutamate + meso-2,6-diaminopimelate + ATP = UDP-N-acetyl-alpha-D-muramoyl-L-alanyl-gamma-D-glutamyl-meso-2,6-diaminopimelate + ADP + phosphate + H(+). The protein operates within cell wall biogenesis; peptidoglycan biosynthesis. Catalyzes the addition of meso-diaminopimelic acid to the nucleotide precursor UDP-N-acetylmuramoyl-L-alanyl-D-glutamate (UMAG) in the biosynthesis of bacterial cell-wall peptidoglycan. The protein is UDP-N-acetylmuramoyl-L-alanyl-D-glutamate--2,6-diaminopimelate ligase of Rickettsia bellii (strain RML369-C).